The chain runs to 361 residues: Probable dual-specificity RNA methyltransferase RlmN (361 aa).

E91 (proton acceptor) is an active-site residue. Residues 97 to 329 enclose the Radical SAM core domain; it reads QHYGLSVCVT…KKKGGNCVVR (233 aa). A disulfide bond links C104 and C340. Residues C111, C115, and C118 each contribute to the [4Fe-4S] cluster site. S-adenosyl-L-methionine is bound by residues 163–164, S195, 218–220, and N296; these read GE and SLH. The active-site S-methylcysteine intermediate is the C340.

Belongs to the radical SAM superfamily. RlmN family. Requires [4Fe-4S] cluster as cofactor.

The protein resides in the cytoplasm. It carries out the reaction adenosine(2503) in 23S rRNA + 2 reduced [2Fe-2S]-[ferredoxin] + 2 S-adenosyl-L-methionine = 2-methyladenosine(2503) in 23S rRNA + 5'-deoxyadenosine + L-methionine + 2 oxidized [2Fe-2S]-[ferredoxin] + S-adenosyl-L-homocysteine. The enzyme catalyses adenosine(37) in tRNA + 2 reduced [2Fe-2S]-[ferredoxin] + 2 S-adenosyl-L-methionine = 2-methyladenosine(37) in tRNA + 5'-deoxyadenosine + L-methionine + 2 oxidized [2Fe-2S]-[ferredoxin] + S-adenosyl-L-homocysteine. In terms of biological role, specifically methylates position 2 of adenine 2503 in 23S rRNA and position 2 of adenine 37 in tRNAs. The sequence is that of Probable dual-specificity RNA methyltransferase RlmN from Streptococcus pneumoniae (strain Hungary19A-6).